We begin with the raw amino-acid sequence, 241 residues long: MQINISNLDVKNHLDKFIEDRLEYEFCKQDKYLYLENDNLKLHYNNKELFIDFNDSEILNRINPKTKKCSVVQAIEGRSKAKLTILDTTAGLGRDTFTLAARGHTLLTLEKDSYLYLLLKDALQRAQQINYLKEIANRITLINIDSNEYILTTDKSFDCVYVDPMFPPRKKSAKVKQGMQILHQVGFNDEVSNSNLLDNIIQTQISPKAVVKRPINAEFLSNKKPSSQLKGKTNRFDIYSL.

S-adenosyl-L-methionine is bound by residues 94 to 95 (RD) and Asp163.

Belongs to the methyltransferase superfamily. RsmJ family.

The protein resides in the cytoplasm. It catalyses the reaction guanosine(1516) in 16S rRNA + S-adenosyl-L-methionine = N(2)-methylguanosine(1516) in 16S rRNA + S-adenosyl-L-homocysteine + H(+). Specifically methylates the guanosine in position 1516 of 16S rRNA. The chain is Ribosomal RNA small subunit methyltransferase J from Francisella tularensis subsp. tularensis (strain FSC 198).